Reading from the N-terminus, the 535-residue chain is uncharacterized protein (535 aa).

Disordered stretches follow at residues 1–58, 211–254, 313–353, 376–416, 421–440, and 508–535; these read MSMK…PRGP, EPPK…PPCI, RRVA…EQVK, RPDK…DQRL, QGLDSGAMDDDTYNPYDAAW, and SLFEHTKEKKRGGDGGDSRGESKRSRRD. The span at 22 to 34 shows a compositional bias: basic and acidic residues; the sequence is IRRDPWFGGRDNE. The tract at residues 179–342 is SNW; the sequence is AQYIRYTPSQ…KARQERSAMR (164 aa). A compositionally biased stretch (basic and acidic residues) spans 376-393; it reads RPDKADKLRKERERDISE. Positions 511–535 are enriched in basic and acidic residues; that stretch reads EHTKEKKRGGDGGDSRGESKRSRRD.

The protein belongs to the SNW family.

This is an uncharacterized protein from Caenorhabditis elegans.